We begin with the raw amino-acid sequence, 289 residues long: 4-hydroxy-tetrahydrodipicolinate synthase (289 aa).

Residue Thr-44 participates in pyruvate binding. The Proton donor/acceptor role is filled by Tyr-130. Lys-158 (schiff-base intermediate with substrate) is an active-site residue. Ile-200 contributes to the pyruvate binding site.

It belongs to the DapA family. As to quaternary structure, homotetramer; dimer of dimers.

The protein localises to the cytoplasm. The enzyme catalyses L-aspartate 4-semialdehyde + pyruvate = (2S,4S)-4-hydroxy-2,3,4,5-tetrahydrodipicolinate + H2O + H(+). Its pathway is amino-acid biosynthesis; L-lysine biosynthesis via DAP pathway; (S)-tetrahydrodipicolinate from L-aspartate: step 3/4. Its function is as follows. Catalyzes the condensation of (S)-aspartate-beta-semialdehyde [(S)-ASA] and pyruvate to 4-hydroxy-tetrahydrodipicolinate (HTPA). The protein is 4-hydroxy-tetrahydrodipicolinate synthase of Archaeoglobus fulgidus (strain ATCC 49558 / DSM 4304 / JCM 9628 / NBRC 100126 / VC-16).